The chain runs to 359 residues: Protein-glutamate methylesterase/protein-glutamine glutaminase 2 (359 aa).

Residues 6–123 (KVMIVDDSAL…KSFLEDASND (118 aa)) enclose the Response regulatory domain. Aspartate 57 is subject to 4-aspartylphosphate. A CheB-type methylesterase domain is found at 167–359 (ERTTDQLVAI…GAIVGYGKSC (193 aa)). Catalysis depends on residues serine 179, histidine 205, and aspartate 301.

The protein belongs to the CheB family. Phosphorylated by CheA. Phosphorylation of the N-terminal regulatory domain activates the methylesterase activity.

The protein resides in the cytoplasm. The catalysed reaction is [protein]-L-glutamate 5-O-methyl ester + H2O = L-glutamyl-[protein] + methanol + H(+). It catalyses the reaction L-glutaminyl-[protein] + H2O = L-glutamyl-[protein] + NH4(+). In terms of biological role, involved in chemotaxis. Part of a chemotaxis signal transduction system that modulates chemotaxis in response to various stimuli. Catalyzes the demethylation of specific methylglutamate residues introduced into the chemoreceptors (methyl-accepting chemotaxis proteins or MCP) by CheR. Also mediates the irreversible deamidation of specific glutamine residues to glutamic acid. This is Protein-glutamate methylesterase/protein-glutamine glutaminase 2 from Dechloromonas aromatica (strain RCB).